The sequence spans 288 residues: 4-diphosphocytidyl-2-C-methyl-D-erythritol kinase (288 aa).

Lys8 is an active-site residue. 90 to 100 (PLEAGLAGGSA) lines the ATP pocket. The active site involves Asp132.

It belongs to the GHMP kinase family. IspE subfamily.

The catalysed reaction is 4-CDP-2-C-methyl-D-erythritol + ATP = 4-CDP-2-C-methyl-D-erythritol 2-phosphate + ADP + H(+). It participates in isoprenoid biosynthesis; isopentenyl diphosphate biosynthesis via DXP pathway; isopentenyl diphosphate from 1-deoxy-D-xylulose 5-phosphate: step 3/6. Its function is as follows. Catalyzes the phosphorylation of the position 2 hydroxy group of 4-diphosphocytidyl-2C-methyl-D-erythritol. This is 4-diphosphocytidyl-2-C-methyl-D-erythritol kinase from Carboxydothermus hydrogenoformans (strain ATCC BAA-161 / DSM 6008 / Z-2901).